We begin with the raw amino-acid sequence, 648 residues long: Centrosomal protein of 63 kDa-B (648 aa).

Coiled-coil stretches lie at residues 19 to 188 (DSCE…QSHN) and 222 to 555 (EEEL…DAAS). Ser559 carries the post-translational modification Phosphoserine; by atm and atr. A coiled-coil region spans residues 611–644 (FLQEEEQRSHELLQRLNAHIEELKQESQRTVEHF).

This sequence belongs to the CEP63 family. Post-translationally, phosphorylation at Ser-559 by atm and atr promotes its delocalization from the centrosome and impairs its ability to promote centrosome dependent spindle assembly.

The protein resides in the cytoplasm. Its subcellular location is the cytoskeleton. The protein localises to the microtubule organizing center. It localises to the centrosome. It is found in the centriole. Its function is as follows. Required for normal spindle assembly. Plays a key role in mother-centriole-dependent centriole duplication. Plays a role in DNA damage response. Following DNA damage, such as double-strand breaks (DSBs), is removed from centrosomes; this leads to the inactivation of spindle assembly and delay in mitotic progression. The protein is Centrosomal protein of 63 kDa-B (cep63-b) of Xenopus laevis (African clawed frog).